A 232-amino-acid polypeptide reads, in one-letter code: Pyridoxal 5'-phosphate synthase subunit PdxS (232 aa).

Lys-23 (schiff-base intermediate with D-ribose 5-phosphate) is an active-site residue. Gly-95 contacts D-ribose 5-phosphate. Arg-107 provides a ligand contact to D-glyceraldehyde 3-phosphate. Residues Gly-156 and 177–178 (GS) each bind D-ribose 5-phosphate.

Belongs to the PdxS/SNZ family. As to quaternary structure, in the presence of PdxT, forms a dodecamer of heterodimers.

The enzyme catalyses aldehydo-D-ribose 5-phosphate + D-glyceraldehyde 3-phosphate + L-glutamine = pyridoxal 5'-phosphate + L-glutamate + phosphate + 3 H2O + H(+). It functions in the pathway cofactor biosynthesis; pyridoxal 5'-phosphate biosynthesis. Catalyzes the formation of pyridoxal 5'-phosphate from ribose 5-phosphate (RBP), glyceraldehyde 3-phosphate (G3P) and ammonia. The ammonia is provided by the PdxT subunit. Can also use ribulose 5-phosphate and dihydroxyacetone phosphate as substrates, resulting from enzyme-catalyzed isomerization of RBP and G3P, respectively. The polypeptide is Pyridoxal 5'-phosphate synthase subunit PdxS (Clostridium novyi).